The primary structure comprises 690 residues: Serotransferrin-1 (690 aa).

A signal peptide spans 1 to 18; it reads MKLLLLSALLGCLATAYA. Transferrin-like domains are found at residues 25 to 329 and 340 to 669; these read VKWC…SLKK and IKWC…SLRK. Cys28 and Cys50 are joined by a disulfide. 2 residues coordinate Fe(3+): Asp74 and Tyr104. 3 disulfide bridges follow: Cys127–Cys207, Cys172–Cys186, and Cys235–Cys249. The hydrogencarbonate site is built by Thr129, Ser134, Gly136, and Trp137. A glycan (N-linked (GlcNAc...) asparagine) is linked at Asn169. Tyr201 contacts Fe(3+). Residue His257 participates in Fe(3+) binding. Cystine bridges form between Cys343-Cys379 and Cys353-Cys370. Positions 394 and 428 each coordinate Fe(3+). 7 cysteine pairs are disulfide-bonded: Cys404-Cys681, Cys419-Cys642, Cys451-Cys529, Cys475-Cys670, Cys485-Cys499, Cys496-Cys512, and Cys569-Cys583. Hydrogencarbonate is bound by residues Thr453, Arg457, Ala459, and Gly460. Tyr523 serves as a coordination point for Fe(3+). His591 serves as a coordination point for Fe(3+).

This sequence belongs to the transferrin family. Monomer. Abundant in liver and serum with smaller amounts found in the stomach and kidney.

The protein localises to the secreted. Transferrins are iron binding transport proteins which can bind two Fe(3+) ions in association with the binding of an anion, usually bicarbonate. It is responsible for the transport of iron from sites of absorption and heme degradation to those of storage and utilization. Serum transferrin may also have a further role in stimulating cell proliferation. The sequence is that of Serotransferrin-1 (tf1) from Salmo salar (Atlantic salmon).